The chain runs to 157 residues: Peptide methionine sulfoxide reductase MsrA (157 aa).

Residue C10 is part of the active site.

Belongs to the MsrA Met sulfoxide reductase family.

The enzyme catalyses L-methionyl-[protein] + [thioredoxin]-disulfide + H2O = L-methionyl-(S)-S-oxide-[protein] + [thioredoxin]-dithiol. It carries out the reaction [thioredoxin]-disulfide + L-methionine + H2O = L-methionine (S)-S-oxide + [thioredoxin]-dithiol. Has an important function as a repair enzyme for proteins that have been inactivated by oxidation. Catalyzes the reversible oxidation-reduction of methionine sulfoxide in proteins to methionine. In Clostridium perfringens (strain ATCC 13124 / DSM 756 / JCM 1290 / NCIMB 6125 / NCTC 8237 / Type A), this protein is Peptide methionine sulfoxide reductase MsrA.